The following is a 728-amino-acid chain: MRLTFIPSLIGVANAVCPYMTGELNRRDEISDGDAAAATEEFLSQYYLNDNDAFMTSDVGGPIEDQNSLSAGERGPTLLEDFIFRQKIQRFDHERVPERAVHARGAGAHGVFTSYGDFSNITAASFLAKEGKQTPVFVRFSTVAGSRGSSDLARDVHGFATRFYTDEGNFDIVGNNIPVFFIQDAILFPDLIHAVKPRGDNEIPQAATAHDSAWDFFSQQPSTMHTLLWAMSGHGIPRSFRHVDGFGVHTFRFVTDDGASKLVKFHWKSLQGKASMVWEEAQQTSGKNPDFMRQDLHDAIEAGRYPEWELGVQIMDEEDQLRFGFDLLDPTKIVPEEFVPITKLGKMQLNRNPRNYFAETEQVMFQPGHIVRGVDFTEDPLLQGRLFSYLDTQLNRHGGPNFEQLPINQPRVPVHNNNRDGAGQMFIPLNPHAYSPKTSVNGSPKQANQTVGDGFFTAPGRTTSGKLVRAVSSSFEDVWSQPRLFYNSLVPAEKQFVIDAIRFENANVKSPVVKNNVIIQLNRIDNDLARRVARAIGVAEPEPDPTFYHNNKTADVGTFGTKLKKLDGLKVGVLGSVQHPGSVEGASTLRDRLKDDGVDVVLVAERLADGVDQTYSTSDAIQFDAVVVAAGAESLFAASSFTGGSANSASGASSLYPTGRPLQILIDGFRFGKTVGALGSGTAALRNAGIATSRDGVYVAQSVTDDFANDLKEGLRTFKFLDRFPVDH.

The N-terminal stretch at 1–15 (MRLTFIPSLIGVANA) is a signal peptide. A propeptide spanning residues 16–27 (VCPYMTGELNRR) is cleaved from the precursor. Residue histidine 102 is part of the active site. Residue asparagine 120 is glycosylated (N-linked (GlcNAc...) asparagine). Asparagine 175 is a catalytic residue. Position 389 (tyrosine 389) interacts with heme. N-linked (GlcNAc...) asparagine glycans are attached at residues asparagine 448 and asparagine 551.

It belongs to the catalase family. In terms of assembly, homotetramer. Heme serves as cofactor. Post-translationally, N-glycosylated.

The protein resides in the secreted. The enzyme catalyses 2 H2O2 = O2 + 2 H2O. Its function is as follows. Occurs in almost all aerobically respiring organisms and serves to protect cells from the toxic effects of hydrogen peroxide. This chain is Catalase B (catB), found in Aspergillus fumigatus (strain ATCC MYA-4609 / CBS 101355 / FGSC A1100 / Af293) (Neosartorya fumigata).